The sequence spans 150 residues: Early 4 ORF6/7 control protein (150 aa).

Residues 1–31 (MTTSGVPFGMTLRPTRSRLSRRTPYSRDRLP) are disordered. The Nuclear localization signal signature appears at 1–58 (MTTSGVPFGMTLRPTRSRLSRRTPYSRDRLPPFETETRATILEDHPLLPECNTLTMHN).

It belongs to the adenoviridae E4-orf6/7 family. Interacts with host E2F proteins.

It is found in the host nucleus. Its function is as follows. Modulates viral and host transcriptional activity to promote viral genome replication. Stimulates viral E2a promoter activity by binding and inducing dimerization of host E2F. During viral infection E1A protein binds to cellular retinablastoma (RB) family members and dissociates these repressors from a complex with E2F proteins. Free E2F is then bound to E4orf6/7 which leads to transactivation of viral E2 promoter, and cellular promoters such as E2F-1 promoter. Activation of cellular E2F targets promote cell cycle S phase and thereby possibly favorises viral DNA replication process. The polypeptide is Early 4 ORF6/7 control protein (Human adenovirus C serotype 2 (HAdV-2)).